We begin with the raw amino-acid sequence, 497 residues long: Subtilisin-like protease CPC735_031240 (497 aa).

Positions 1–16 (MKGVLSLSLLPLLAAP) are cleaved as a signal peptide. Residues 17–136 (SPILVDTIHR…IEKDSEVHAW (120 aa)) constitute a propeptide that is removed on maturation. Residues 43-134 (SYIVVFKKNV…QYIEKDSEVH (92 aa)) form the Inhibitor I9 domain. A Peptidase S8 domain is found at 146–452 (PWGLARVSHR…GGSSNYTAII (307 aa)). Catalysis depends on charge relay system residues aspartate 182 and histidine 214. Asparagine 244 and asparagine 284 each carry an N-linked (GlcNAc...) asparagine glycan. Residue serine 380 is the Charge relay system of the active site. Residue asparagine 447 is glycosylated (N-linked (GlcNAc...) asparagine).

The protein belongs to the peptidase S8 family.

It is found in the secreted. In terms of biological role, secreted subtilisin-like serine protease with keratinolytic activity that contributes to pathogenicity. In Coccidioides posadasii (strain C735) (Valley fever fungus), this protein is Subtilisin-like protease CPC735_031240.